Here is a 253-residue protein sequence, read N- to C-terminus: MKHIVIPARFSSSRLPGKPLLLIHDRPMILRVVDQAKKVEGFDDLCVATDDERIAEICRAEGVDVVLTSADHPSGTDRLSEVARIKGWDADDIIVNVQGDEPLLPAQLVQQVAKLLVDKPNCSMSTLCEPIHALDEFQRDSIVKVVMSKQNEALYFSRATIPYDRDSAKQAEPTLHSQAFRHLGLYAYRVSLLQEYVTWEMGKLEKLESLEQLRVLENGHRIAIAVAEANLPPGVDTQADLDRLNNMPVESFE.

Belongs to the KdsB family.

The protein localises to the cytoplasm. The enzyme catalyses 3-deoxy-alpha-D-manno-oct-2-ulosonate + CTP = CMP-3-deoxy-beta-D-manno-octulosonate + diphosphate. The protein operates within nucleotide-sugar biosynthesis; CMP-3-deoxy-D-manno-octulosonate biosynthesis; CMP-3-deoxy-D-manno-octulosonate from 3-deoxy-D-manno-octulosonate and CTP: step 1/1. It participates in bacterial outer membrane biogenesis; lipopolysaccharide biosynthesis. Functionally, activates KDO (a required 8-carbon sugar) for incorporation into bacterial lipopolysaccharide in Gram-negative bacteria. This chain is 3-deoxy-manno-octulosonate cytidylyltransferase, found in Acinetobacter baumannii (strain SDF).